Reading from the N-terminus, the 162-residue chain is Interleukin-15 (162 aa).

The first 29 residues, 1–29 (MRISKPHLRSISIQCYLCLLLKSHFLTEA), serve as a signal peptide directing secretion. Residues 30–48 (GIHVFILGCFSAGLPKTEA) constitute a propeptide that is removed on maturation. Intrachain disulfides connect C83–C133 and C90–C136. N127 carries N-linked (GlcNAc...) asparagine glycosylation.

It belongs to the IL-15/IL-21 family.

The protein resides in the secreted. Its function is as follows. Cytokine that plays a major role in the development of inflammatory and protective immune responses to microbial invaders and parasites by modulating immune cells of both the innate and adaptive immune systems. Stimulates the proliferation of natural killer cells, T-cells and B-cells and promotes the secretion of several cytokines. In monocytes, induces the production of IL8 and monocyte chemotactic protein 1/CCL2, two chemokines that attract neutrophils and monocytes respectively to sites of infection. Unlike most cytokines, which are secreted in soluble form, IL15 is expressed in association with its high affinity IL15RA on the surface of IL15-producing cells and delivers signals to target cells that express IL2RB and IL2RG receptor subunits. Binding to its receptor triggers the phosphorylation of JAK1 and JAK3 and the recruitment and subsequent phosphorylation of signal transducer and activator of transcription-3/STAT3 and STAT5. In mast cells, induces the rapid tyrosine phosphorylation of STAT6 and thereby controls mast cell survival and release of cytokines such as IL4. This Chlorocebus aethiops (Green monkey) protein is Interleukin-15 (IL15).